A 253-amino-acid chain; its full sequence is ATP synthase subunit a (253 aa).

6 helical membrane-spanning segments follow: residues 30–50, 88–108, 118–138, 144–164, 184–204, and 211–231; these read FTNA…VLLA, FFPF…IGLV, IAVT…YGLI, FLGI…MIMI, MLAG…LLGA, and VAPL…LVAF.

The protein belongs to the ATPase A chain family. As to quaternary structure, F-type ATPases have 2 components, CF(1) - the catalytic core - and CF(0) - the membrane proton channel. CF(1) has five subunits: alpha(3), beta(3), gamma(1), delta(1), epsilon(1). CF(0) has three main subunits: a(1), b(2) and c(9-12). The alpha and beta chains form an alternating ring which encloses part of the gamma chain. CF(1) is attached to CF(0) by a central stalk formed by the gamma and epsilon chains, while a peripheral stalk is formed by the delta and b chains.

The protein localises to the cell inner membrane. Its function is as follows. Key component of the proton channel; it plays a direct role in the translocation of protons across the membrane. This Beijerinckia indica subsp. indica (strain ATCC 9039 / DSM 1715 / NCIMB 8712) protein is ATP synthase subunit a.